Here is a 325-residue protein sequence, read N- to C-terminus: MSKTVTVTGAAGAIGYAILFRIASGQMLGPDQKLRLKLLEIEPALKAAEGTAMELYDCAFPLLEAVDITADPKEAFDGANVCLLIGARPRQRGMERADLLEANGQIFKPQGRAINDHAADDVRVLVVGNPANTNCLIAMNNAPDVPRERFSAMTRLDENRAVSMLAQKLGVGVEDVRDLVVWGNHSPTMFPDLFNARVKGQRAVDLVEMEWYENEYIPRVGKRGAEIIEARGASSAASAANAAIDHVRDWMLGADSLHSMAVASSGQYGVEEGLVSSFPVRLPGGGEYEIPEGLEVGDFARSKLEITIGELKEERDAVRKLGLIG.

Position 9–15 (9–15 (GAAGAIG)) interacts with NAD(+). The substrate site is built by arginine 90 and arginine 96. Residues asparagine 103, glutamine 110, and 127-129 (VGN) contribute to the NAD(+) site. The substrate site is built by asparagine 129 and arginine 160. Histidine 185 (proton acceptor) is an active-site residue.

The protein belongs to the LDH/MDH superfamily. MDH type 2 family.

The enzyme catalyses (S)-malate + NAD(+) = oxaloacetate + NADH + H(+). Its function is as follows. Catalyzes the reversible oxidation of malate to oxaloacetate. In Rubrobacter xylanophilus (strain DSM 9941 / JCM 11954 / NBRC 16129 / PRD-1), this protein is Malate dehydrogenase.